A 64-amino-acid polypeptide reads, in one-letter code: Conotoxin Ts-011 (64 aa).

An N-terminal signal peptide occupies residues 1-22; it reads MHCLPVLVILLLLIASTPSVDA. Residues 23 to 51 constitute a propeptide that is removed on maturation; that stretch reads RPKTKDDVPLASFHGADNANRILRTLWNL. At isoleucine 63 the chain carries Isoleucine amide.

This sequence belongs to the conotoxin T superfamily. Contains 2 disulfide bonds that can be either 'C1-C3, C2-C4' or 'C1-C4, C2-C3', since these disulfide connectivities have been observed for conotoxins with cysteine framework V (for examples, see AC P0DQQ7 and AC P81755). In terms of tissue distribution, expressed by the venom duct.

The protein resides in the secreted. The sequence is that of Conotoxin Ts-011 from Conus tessulatus (Tessellate cone).